The chain runs to 416 residues: Notoamide biosynthesis cluster protein N' (416 aa).

The first 16 residues, 1 to 16 (MRAALLTLAFTALAAA), serve as a signal peptide directing secretion. N119 and N262 each carry an N-linked (GlcNAc...) asparagine glycan.

Part of the gene cluster that mediates the biosynthesis of notoamide, a fungal indole alkaloid that belongs to a family of natural products containing a characteristic bicyclo[2.2.2]diazaoctane core. The first step of notoamide biosynthesis involves coupling of L-proline and L-tryptophan by the bimodular NRPS notE', to produce cyclo-L-tryptophan-L-proline called brevianamide F. The reverse prenyltransferase notF' then acts as a deoxybrevianamide E synthase and converts brevianamide F to deoxybrevianamide E via reverse prenylation at C-2 of the indole ring leading to the bicyclo[2.2.2]diazaoctane core. Deoxybrevianamide E is further hydroxylated at C-6 of the indole ring, likely catalyzed by the cytochrome P450 monooxygenase notG', to yield 6-hydroxy-deoxybrevianamide E. 6-hydroxy-deoxybrevianamide E is a specific substrate of the prenyltransferase notC' for normal prenylation at C-7 to produce 6-hydroxy-7-prenyl-deoxybrevianamide, also called notoamide S. As the proposed pivotal branching point in notoamide biosynthesis, notoamide S can be diverted to notoamide E through an oxidative pyran ring closure putatively catalyzed by either notH' cytochrome P450 monooxygenase or the notD' FAD-linked oxidoreductase. This step would be followed by an indole 2,3-epoxidation-initiated pinacol-like rearrangement catalyzed by the notB' FAD-dependent monooxygenase leading to the formation of notoamide C and notoamide D. On the other hand notoamide S is converted to notoamide T by notH' (or notD'), a bifunctional oxidase that also functions as the intramolecular Diels-Alderase responsible for generation of (-)-notoamide T. To generate antipodal (+)-notoaminide T, notH (or notD) in Aspergillus strain MF297-2 is expected to catalyze a Diels-Alder reaction leading to the opposite stereochemistry. The remaining oxidoreductase notD' (or notH') likely catalyzes the oxidative pyran ring formation to yield (-)-stephacidin A. The FAD-dependent monooxygenase notI' is highly similar to notB' and is predicted to catalyze a similar conversion from (-)-stephacidin A to (+)-notoamide B via the 2,3-epoxidation of (-)-stephacidin A followed by a pinacol-type rearrangement. Finally, it remains unclear which enzyme could be responsible for the final hydroxylation steps leading to notoamide A and sclerotiamide. The function of notN' in the notoamide biosynthesis has not been determined yet. The polypeptide is Notoamide biosynthesis cluster protein N' (Aspergillus versicolor).